The chain runs to 304 residues: Porphobilinogen deaminase (304 aa).

Position 240 is an S-(dipyrrolylmethanemethyl)cysteine (cysteine 240).

The protein belongs to the HMBS family. In terms of assembly, monomer. Dipyrromethane is required as a cofactor.

The enzyme catalyses 4 porphobilinogen + H2O = hydroxymethylbilane + 4 NH4(+). The protein operates within porphyrin-containing compound metabolism; protoporphyrin-IX biosynthesis; coproporphyrinogen-III from 5-aminolevulinate: step 2/4. In terms of biological role, tetrapolymerization of the monopyrrole PBG into the hydroxymethylbilane pre-uroporphyrinogen in several discrete steps. In Xanthomonas oryzae pv. oryzae (strain MAFF 311018), this protein is Porphobilinogen deaminase.